The chain runs to 504 residues: MQLFIILSLAFIAAWVVYSRWSEYSRGRQGGSGGLPPGPPRLPIIGNILQLGRDPHKSLAQLAKTYGPLMSLKLGNQFAVVVSSPEMAREILQKQGLIFSKPFTPSAVRVLGHNDISMNMLPASSDRWKKLRRVAREQLFSNPALQATQDIRQERLRQLTDYASRCCAQGRAMNVGEATFTTMTNLMFATLFSVELTQYGATDTGSDKKFKEHVNALTRYMGVPNVADFFPFLAPLDPQGMRRKLTYHLGSLLELVQSLIQQRLQARNDSTYQKKNDFLDTLLDLSEGNEYDLSIKEIKHMFVDLIIAGSDTSAATTEWAMVELLLHPDKMAKLKAELKSVLGEKSIVEESDISRLPYLLATVKEVLRYHPAAPLLAPHAAEEETQVSGYIIPKNTKMFINVWSITRDPSIWKNPESFEPERFLDSEIDFGGQHFELIPFGSGRRICPGMPLASRMLQCMVATLCHNFDWELEKGAESKQLQREDVFGLALQKKIPLRAVPIKV.

A helical membrane pass occupies residues 4–24; it reads FIILSLAFIAAWVVYSRWSEY. C447 serves as a coordination point for heme.

Belongs to the cytochrome P450 family. The cofactor is heme. Expressed in glandular trichomes of young leaves.

The protein localises to the membrane. The enzyme catalyses 11-hydroxyferruginol + 3 reduced [NADPH--hemoprotein reductase] + 3 O2 = carnosate + 3 oxidized [NADPH--hemoprotein reductase] + 4 H2O + 4 H(+). It carries out the reaction miltiradiene + 2 reduced [NADPH--hemoprotein reductase] + 2 O2 = miltiradien-20-al + 2 oxidized [NADPH--hemoprotein reductase] + 3 H2O + 2 H(+). It catalyses the reaction ferruginol + 3 reduced [NADPH--hemoprotein reductase] + 3 O2 = pisiferate + 3 oxidized [NADPH--hemoprotein reductase] + 4 H2O + 4 H(+). It participates in secondary metabolite biosynthesis; terpenoid biosynthesis. In terms of biological role, monooxygenase involved in the biosynthesis of carnosate, a potent antioxidant labdane-related diterpene natural products. Catalyzes the oxidation of 11-hydroxyferruginol to produce carnosate. Mediates the conversion of miltiradien into miltiradien-20-al. Also involved in the production of pisiferic acid and derivative products from ferruginol. This is Carnosic acid synthase from Rosmarinus officinalis (Rosemary).